The sequence spans 271 residues: Intercellular adhesion molecule 4 (271 aa).

Positions 1-22 are cleaved as a signal peptide; it reads MGSLFPLSLLFFLAAAYPGVGS. Topologically, residues 23-240 are extracellular; the sequence is ALGRRTKRAQ…MLAWSPAPTA (218 aa). 2 Ig-like C2-type domains span residues 62–124 and 146–217; these read GKSV…TRWA and GRKY…LNLD. Asn68, Asn78, Asn190, and Asn223 each carry an N-linked (GlcNAc...) asparagine glycan. Disulfide bonds link Cys69–Cys113, Cys69–Cys117, Cys73–Cys117, and Cys153–Cys210. Residues 241–261 form a helical membrane-spanning segment; it reads LASGSIAALVGILLTVGAAYL. Topologically, residues 262–271 are cytoplasmic; the sequence is CKCLAMKSQA.

It belongs to the immunoglobulin superfamily. ICAM family. N- and O-glycosylated. In terms of tissue distribution, erythrocytes.

Its subcellular location is the cell membrane. The protein localises to the secreted. In terms of biological role, ICAM proteins are ligands for the leukocyte adhesion protein LFA-1 (integrin alpha-L/beta-2). ICAM4 is also a ligand for alpha-4/beta-1 and alpha-V integrins. The protein is Intercellular adhesion molecule 4 (ICAM4) of Homo sapiens (Human).